The following is a 261-amino-acid chain: Acyl-[acyl-carrier-protein]--UDP-N-acetylglucosamine O-acyltransferase (261 aa).

The protein belongs to the transferase hexapeptide repeat family. LpxA subfamily. Homotrimer.

It is found in the cytoplasm. The catalysed reaction is a (3R)-hydroxyacyl-[ACP] + UDP-N-acetyl-alpha-D-glucosamine = a UDP-3-O-[(3R)-3-hydroxyacyl]-N-acetyl-alpha-D-glucosamine + holo-[ACP]. It participates in glycolipid biosynthesis; lipid IV(A) biosynthesis; lipid IV(A) from (3R)-3-hydroxytetradecanoyl-[acyl-carrier-protein] and UDP-N-acetyl-alpha-D-glucosamine: step 1/6. In terms of biological role, involved in the biosynthesis of lipid A, a phosphorylated glycolipid that anchors the lipopolysaccharide to the outer membrane of the cell. The sequence is that of Acyl-[acyl-carrier-protein]--UDP-N-acetylglucosamine O-acyltransferase from Sulfurimonas denitrificans (strain ATCC 33889 / DSM 1251) (Thiomicrospira denitrificans (strain ATCC 33889 / DSM 1251)).